Reading from the N-terminus, the 510-residue chain is Light-independent protochlorophyllide reductase subunit B (510 aa).

A [4Fe-4S] cluster-binding site is contributed by Asp36. Asp296 acts as the Proton donor in catalysis. Position 431-432 (431-432 (GM)) interacts with substrate.

The protein belongs to the ChlB/BchB/BchZ family. As to quaternary structure, protochlorophyllide reductase is composed of three subunits; ChlL, ChlN and ChlB. Forms a heterotetramer of two ChlB and two ChlN subunits. [4Fe-4S] cluster is required as a cofactor.

Its subcellular location is the plastid. The protein localises to the chloroplast. It carries out the reaction chlorophyllide a + oxidized 2[4Fe-4S]-[ferredoxin] + 2 ADP + 2 phosphate = protochlorophyllide a + reduced 2[4Fe-4S]-[ferredoxin] + 2 ATP + 2 H2O. The protein operates within porphyrin-containing compound metabolism; chlorophyll biosynthesis (light-independent). Component of the dark-operative protochlorophyllide reductase (DPOR) that uses Mg-ATP and reduced ferredoxin to reduce ring D of protochlorophyllide (Pchlide) to form chlorophyllide a (Chlide). This reaction is light-independent. The NB-protein (ChlN-ChlB) is the catalytic component of the complex. The sequence is that of Light-independent protochlorophyllide reductase subunit B from Chlorokybus atmophyticus (Soil alga).